The chain runs to 474 residues: Lactococcin A secretion protein LcnD (474 aa).

Residues 1–21 (MFDKKLLESSELYDKRYRNFS) lie on the Cytoplasmic side of the membrane. The chain crosses the membrane as a helical span at residues 22-44 (TLIILPLFILLVGGVIFTFFAHK). Residues 45-474 (ELTVISTGSI…LDKIMGRGNQ (430 aa)) are Extracellular-facing.

The protein belongs to the membrane fusion protein (MFP) (TC 8.A.1) family.

The protein resides in the cell membrane. Its function is as follows. Involved in the secretion of lactococcin A. This is Lactococcin A secretion protein LcnD (lcnD) from Lactococcus lactis subsp. cremoris (Streptococcus cremoris).